Consider the following 61-residue polypeptide: Temporin-SN3 (61 aa).

An N-terminal signal peptide occupies residues 1–22; sequence MFTLKKTLLLLFFLGTINLSLC. The propeptide at 23–44 is removed in mature form; the sequence is EEERNAEEERRDGDDEMDVEVK. Lysine 61 is subject to Lysine amide.

The protein belongs to the frog skin active peptide (FSAP) family. Temporin subfamily. In terms of tissue distribution, expressed by the skin glands.

The protein resides in the secreted. Functionally, antimicrobial peptide. Active against some Gram-positive and Gram-negative bacterial strains. Active against fungus C.glabrata 090902 but not against C.albicans ATCC 12231. Shows weak hemolytic activity against human erythrocytes. The polypeptide is Temporin-SN3 (Sylvirana spinulosa (Fine-spined frog)).